Reading from the N-terminus, the 176-residue chain is Small capsomere-interacting protein (176 aa).

Disordered stretches follow at residues 75-109 (DKRQ…ASAG) and 148-176 (ASAA…RKKQ). The segment covering 80–109 (ASVAGAGAHAHLGGSSATPVQQAQAAASAG) has biased composition (low complexity).

This sequence belongs to the herpesviridae small capsomere-interacting protein family. In terms of assembly, interacts with the major capsid protein/MCP.

Its subcellular location is the virion. The protein localises to the host nucleus. Participates in the assembly of the infectious particles by decorating the outer surface of the capsid shell and thus forming a layer between the capsid and the tegument. Complexes composed of the major capsid protein and small capsomere-interacting protein/SCP assemble together in the host cytoplasm and are translocated to the nucleus, where they accumulate and participate in capsid assembly. This chain is Small capsomere-interacting protein, found in Epstein-Barr virus (strain B95-8) (HHV-4).